A 217-amino-acid polypeptide reads, in one-letter code: NAD(P)H-hydrate epimerase (217 aa).

One can recognise a YjeF N-terminal domain in the interval 1–217; the sequence is MRAIENAAMA…VAVADIGLSS (217 aa). 48-52 contacts (6S)-NADPHX; it reads NNGGD. K(+) is bound by residues N49 and D127. (6S)-NADPHX contacts are provided by residues 131–137 and D165; that span reads GIGQTRP. A K(+)-binding site is contributed by T168.

It belongs to the NnrE/AIBP family. K(+) is required as a cofactor.

It carries out the reaction (6R)-NADHX = (6S)-NADHX. It catalyses the reaction (6R)-NADPHX = (6S)-NADPHX. Its function is as follows. Catalyzes the epimerization of the S- and R-forms of NAD(P)HX, a damaged form of NAD(P)H that is a result of enzymatic or heat-dependent hydration. This is a prerequisite for the S-specific NAD(P)H-hydrate dehydratase to allow the repair of both epimers of NAD(P)HX. The polypeptide is NAD(P)H-hydrate epimerase (Cereibacter sphaeroides (strain KD131 / KCTC 12085) (Rhodobacter sphaeroides)).